The primary structure comprises 103 residues: Large ribosomal subunit protein bL21 (103 aa).

It belongs to the bacterial ribosomal protein bL21 family. As to quaternary structure, part of the 50S ribosomal subunit. Contacts protein L20.

This protein binds to 23S rRNA in the presence of protein L20. The protein is Large ribosomal subunit protein bL21 of Pseudomonas syringae pv. tomato (strain ATCC BAA-871 / DC3000).